A 150-amino-acid polypeptide reads, in one-letter code: 3-hydroxyacyl-[acyl-carrier-protein] dehydratase FabZ (150 aa).

The active site involves His-51.

This sequence belongs to the thioester dehydratase family. FabZ subfamily.

It is found in the cytoplasm. The enzyme catalyses a (3R)-hydroxyacyl-[ACP] = a (2E)-enoyl-[ACP] + H2O. Its function is as follows. Involved in unsaturated fatty acids biosynthesis. Catalyzes the dehydration of short chain beta-hydroxyacyl-ACPs and long chain saturated and unsaturated beta-hydroxyacyl-ACPs. The sequence is that of 3-hydroxyacyl-[acyl-carrier-protein] dehydratase FabZ from Legionella pneumophila (strain Lens).